We begin with the raw amino-acid sequence, 443 residues long: Glutamate--tRNA ligase 2 (443 aa).

Residues 7–17 (PSPTGYLHVGN) carry the 'HIGH' region motif. The 'KMSKS' region signature appears at 236–240 (KISKR). Lysine 239 serves as a coordination point for ATP.

This sequence belongs to the class-I aminoacyl-tRNA synthetase family. Glutamate--tRNA ligase type 1 subfamily. As to quaternary structure, monomer.

The protein localises to the cytoplasm. The enzyme catalyses tRNA(Glu) + L-glutamate + ATP = L-glutamyl-tRNA(Glu) + AMP + diphosphate. Catalyzes the attachment of glutamate to tRNA(Glu) in a two-step reaction: glutamate is first activated by ATP to form Glu-AMP and then transferred to the acceptor end of tRNA(Glu). In Ehrlichia canis (strain Jake), this protein is Glutamate--tRNA ligase 2.